The following is a 316-amino-acid chain: Methionyl-tRNA formyltransferase (316 aa).

Residue 110–113 (SLLP) coordinates (6S)-5,6,7,8-tetrahydrofolate.

This sequence belongs to the Fmt family.

It catalyses the reaction L-methionyl-tRNA(fMet) + (6R)-10-formyltetrahydrofolate = N-formyl-L-methionyl-tRNA(fMet) + (6S)-5,6,7,8-tetrahydrofolate + H(+). In terms of biological role, attaches a formyl group to the free amino group of methionyl-tRNA(fMet). The formyl group appears to play a dual role in the initiator identity of N-formylmethionyl-tRNA by promoting its recognition by IF2 and preventing the misappropriation of this tRNA by the elongation apparatus. The protein is Methionyl-tRNA formyltransferase of Halothermothrix orenii (strain H 168 / OCM 544 / DSM 9562).